The chain runs to 379 residues: 3-dehydroquinate synthase (379 aa).

It belongs to the archaeal-type DHQ synthase family.

It carries out the reaction 2-amino-2,3,7-trideoxy-D-lyxo-hept-6-ulosonate + NAD(+) + H2O = 3-dehydroquinate + NH4(+) + NADH + H(+). Functionally, catalyzes the oxidative deamination and cyclization of 2-amino-3,7-dideoxy-D-threo-hept-6-ulosonic acid (ADH) to yield 3-dehydroquinate (DHQ), which is fed into the canonical shikimic pathway of aromatic amino acid biosynthesis. In Methanococcoides burtonii (strain DSM 6242 / NBRC 107633 / OCM 468 / ACE-M), this protein is 3-dehydroquinate synthase.